The primary structure comprises 120 residues: NAD(P)H-quinone oxidoreductase subunit 3, chloroplastic (120 aa).

Helical transmembrane passes span 9 to 29 (IFWTFLIISSVIPILAFLISG), 64 to 84 (MFALVFVVFDVETVFLYPWAM), and 88 to 108 (VLGVSVFIEAFIFVLIPIVGS).

The protein belongs to the complex I subunit 3 family. In terms of assembly, NDH is composed of at least 16 different subunits, 5 of which are encoded in the nucleus.

Its subcellular location is the plastid. The protein localises to the chloroplast thylakoid membrane. It carries out the reaction a plastoquinone + NADH + (n+1) H(+)(in) = a plastoquinol + NAD(+) + n H(+)(out). The catalysed reaction is a plastoquinone + NADPH + (n+1) H(+)(in) = a plastoquinol + NADP(+) + n H(+)(out). Functionally, NDH shuttles electrons from NAD(P)H:plastoquinone, via FMN and iron-sulfur (Fe-S) centers, to quinones in the photosynthetic chain and possibly in a chloroplast respiratory chain. The immediate electron acceptor for the enzyme in this species is believed to be plastoquinone. Couples the redox reaction to proton translocation, and thus conserves the redox energy in a proton gradient. This Piper cenocladum (Ant piper) protein is NAD(P)H-quinone oxidoreductase subunit 3, chloroplastic.